Here is a 301-residue protein sequence, read N- to C-terminus: N-acetylmuramic acid 6-phosphate etherase (301 aa).

Residues 57 to 220 form the SIS domain; sequence ITEAFKKGGR…TTGAMIRSGK (164 aa). E85 acts as the Proton donor in catalysis. The active site involves E116.

The protein belongs to the GCKR-like family. MurNAc-6-P etherase subfamily. As to quaternary structure, homodimer.

It catalyses the reaction N-acetyl-D-muramate 6-phosphate + H2O = N-acetyl-D-glucosamine 6-phosphate + (R)-lactate. The protein operates within amino-sugar metabolism; 1,6-anhydro-N-acetylmuramate degradation. It functions in the pathway amino-sugar metabolism; N-acetylmuramate degradation. It participates in cell wall biogenesis; peptidoglycan recycling. Its function is as follows. Specifically catalyzes the cleavage of the D-lactyl ether substituent of MurNAc 6-phosphate, producing GlcNAc 6-phosphate and D-lactate. Together with AnmK, is also required for the utilization of anhydro-N-acetylmuramic acid (anhMurNAc) either imported from the medium or derived from its own cell wall murein, and thus plays a role in cell wall recycling. This is N-acetylmuramic acid 6-phosphate etherase from Photobacterium profundum (strain SS9).